The chain runs to 1026 residues: mRNA transport homolog 4 (1026 aa).

The Helicase ATP-binding domain occupies 134-290; the sequence is ILCIDNNQSV…WVASIKQQPV (157 aa). 147 to 154 contacts ATP; that stretch reads AHTSAGKT. Residues 238–241 carry the DEIH box motif; that stretch reads DEIH. In terms of domain architecture, Helicase C-terminal spans 360–564; the sequence is NVLKIIRSVA…NMVLNLMRVE (205 aa).

The protein belongs to the helicase family. SKI2 subfamily.

It localises to the nucleus. This is mRNA transport homolog 4 (mtr-4) from Caenorhabditis elegans.